The primary structure comprises 155 residues: Basic phospholipase A2 PC9 (155 aa).

Positions 1–21 are cleaved as a signal peptide; sequence MYPAHLLVLLAVCVSLLGASA. A propeptide spanning residues 22 to 27 is cleaved from the precursor; the sequence is ISPRPL. 7 cysteine pairs are disulfide-bonded: Cys38–Cys98, Cys54–Cys144, Cys56–Cys72, Cys71–Cys125, Cys78–Cys118, Cys87–Cys111, and Cys105–Cys116. Ca(2+) is bound by residues Tyr55, Gly57, and Gly59. His75 is a catalytic residue. Asp76 is a Ca(2+) binding site. The active site involves Asp119.

The protein belongs to the phospholipase A2 family. Group I subfamily. D49 sub-subfamily. Ca(2+) is required as a cofactor. In terms of tissue distribution, expressed by the venom gland.

The protein localises to the secreted. It carries out the reaction a 1,2-diacyl-sn-glycero-3-phosphocholine + H2O = a 1-acyl-sn-glycero-3-phosphocholine + a fatty acid + H(+). Its function is as follows. Snake venom phospholipase A2 (PLA2) that inhibits neuromuscular transmission by blocking acetylcholine release from the nerve termini. PLA2 catalyzes the calcium-dependent hydrolysis of the 2-acyl groups in 3-sn-phosphoglycerides. The protein is Basic phospholipase A2 PC9 of Laticauda colubrina (Yellow-lipped sea krait).